We begin with the raw amino-acid sequence, 647 residues long: UvrABC system protein C (647 aa).

Residues 16 to 95 form the GIY-YIG domain; sequence VEPGVYRFRD…IKEFDPRFNV (80 aa). A UVR domain is found at 208-243; the sequence is DRYARELEQQMNAAAENLDFERAARLRDDRSALKRA.

This sequence belongs to the UvrC family. In terms of assembly, interacts with UvrB in an incision complex.

The protein localises to the cytoplasm. Functionally, the UvrABC repair system catalyzes the recognition and processing of DNA lesions. UvrC both incises the 5' and 3' sides of the lesion. The N-terminal half is responsible for the 3' incision and the C-terminal half is responsible for the 5' incision. This Mycobacterium marinum (strain ATCC BAA-535 / M) protein is UvrABC system protein C.